Consider the following 304-residue polypeptide: Ribosomal protein L11 methyltransferase (304 aa).

S-adenosyl-L-methionine-binding residues include threonine 156, glycine 177, aspartate 199, and asparagine 240.

It belongs to the methyltransferase superfamily. PrmA family.

The protein resides in the cytoplasm. The enzyme catalyses L-lysyl-[protein] + 3 S-adenosyl-L-methionine = N(6),N(6),N(6)-trimethyl-L-lysyl-[protein] + 3 S-adenosyl-L-homocysteine + 3 H(+). Its function is as follows. Methylates ribosomal protein L11. In Symbiobacterium thermophilum (strain DSM 24528 / JCM 14929 / IAM 14863 / T), this protein is Ribosomal protein L11 methyltransferase.